A 303-amino-acid polypeptide reads, in one-letter code: 34 kDa antigenic protein homolog (303 aa).

Transmembrane regions (helical) follow at residues 42–62, 77–97, 102–122, and 134–154; these read IAVA…MFTL, TGLP…ALVP, HVTV…SATF, and LWVV…ALLV. Low complexity-rich tracts occupy residues 194–207 and 215–255; these read QGAQ…SPGP and GYGS…HQGP. Residues 194-303 form a disordered region; sequence QGAQQAAGLQ…QSSSPGGAPV (110 aa). The span at 256 to 271 shows a compositional bias: pro residues; it reads STPPTGFPSFSPPPPV. Residues 274 to 286 are compositionally biased toward polar residues; sequence GTGSQAGSAPVNY. The segment covering 287-303 has biased composition (low complexity); sequence SNPSGGEQSSSPGGAPV.

It to M.paratuberculosis 34 kDa antigenic protein.

It localises to the cell membrane. The sequence is that of 34 kDa antigenic protein homolog from Mycobacterium bovis (strain ATCC BAA-935 / AF2122/97).